The sequence spans 352 residues: Uroporphyrinogen decarboxylase (352 aa).

Residues 26-30 (RQAGR), Phe45, Asp76, Tyr153, Ser208, and His323 contribute to the substrate site.

Belongs to the uroporphyrinogen decarboxylase family. As to quaternary structure, homodimer.

The protein localises to the cytoplasm. It carries out the reaction uroporphyrinogen III + 4 H(+) = coproporphyrinogen III + 4 CO2. It functions in the pathway porphyrin-containing compound metabolism; protoporphyrin-IX biosynthesis; coproporphyrinogen-III from 5-aminolevulinate: step 4/4. Catalyzes the decarboxylation of four acetate groups of uroporphyrinogen-III to yield coproporphyrinogen-III. In Prochlorococcus marinus (strain MIT 9313), this protein is Uroporphyrinogen decarboxylase.